Here is a 92-residue protein sequence, read N- to C-terminus: MPRSLKKGPFVDEHLLNKVDAQNEKGTKQVIKTWSRRSTILPDFIGHTFAVHDGRKHVPVFVDDSMVGHKLGEFAPTKTFKGHIKDDKKGRR.

The protein belongs to the universal ribosomal protein uS19 family.

Protein S19 forms a complex with S13 that binds strongly to the 16S ribosomal RNA. This chain is Small ribosomal subunit protein uS19, found in Corynebacterium diphtheriae (strain ATCC 700971 / NCTC 13129 / Biotype gravis).